The following is a 469-amino-acid chain: Keratin, type I cytoskeletal 26 (469 aa).

The interval 1 to 82 (MSFRLSSGSR…ENEHGLLPGN (82 aa)) is head. A coil 1A region spans residues 83–118 (EKVTLQNLNDRLASYLDHVCTLEEANADLEQKIKGW). One can recognise an IF rod domain in the interval 83–398 (EKVTLQNLND…KLIDGEGRKS (316 aa)). The tract at residues 119-140 (YEKYGPGSGRQLAYDCSKYFSV) is linker 1. Residues 141-232 (TEDLKRQIIS…KNHQEEMKVM (92 aa)) form a coil 1B region. The interval 233–255 (QGAAGGNVNVEINAAPGVDLTVL) is linker 12. The interval 256–394 (LNNMRAEYED…EMYCKLIDGE (139 aa)) is coil 2. The interval 395–465 (GRKSKSTYCK…NITMEQRLPS (71 aa)) is tail. 2 disordered regions span residues 398 to 421 (SKST…KDSK) and 450 to 469 (KSSK…KVPQ). The span at 405-421 (SEGRGPKNSENQVKDSK) shows a compositional bias: basic and acidic residues.

It belongs to the intermediate filament family. Heterotetramer of two type I and two type II keratins.

The polypeptide is Keratin, type I cytoskeletal 26 (Bos taurus (Bovine)).